The primary structure comprises 141 residues: Photosystem II protein PSBR, chloroplastic (141 aa).

Residues 1–27 (MATMQISAKGLAPLRPRVSSRRVVKPV) constitute a chloroplast transit peptide. Phosphothreonine occurs at positions 34 and 37. At S43 the chain carries Phosphoserine. A helical transmembrane segment spans residues 114 to 134 (GLIAWAGLVLVLLAVGVNLII).

The protein belongs to the psbR family.

It is found in the plastid. The protein resides in the chloroplast thylakoid membrane. In terms of biological role, associated with the oxygen-evolving complex of photosystem II (PSII). Is required for the stable binding of LHCSR3 to PSII-LHCII supercomplexes and is essential for efficient energy-dependent quenching and the integrity of the PSII-LHCII-LHCSR3 supercomplex under continuous high light. The chain is Photosystem II protein PSBR, chloroplastic from Chlamydomonas reinhardtii (Chlamydomonas smithii).